The sequence spans 260 residues: Tryptophan synthase alpha chain (260 aa).

Residues E52 and D63 each act as proton acceptor in the active site.

This sequence belongs to the TrpA family. In terms of assembly, tetramer of two alpha and two beta chains.

It carries out the reaction (1S,2R)-1-C-(indol-3-yl)glycerol 3-phosphate + L-serine = D-glyceraldehyde 3-phosphate + L-tryptophan + H2O. The protein operates within amino-acid biosynthesis; L-tryptophan biosynthesis; L-tryptophan from chorismate: step 5/5. In terms of biological role, the alpha subunit is responsible for the aldol cleavage of indoleglycerol phosphate to indole and glyceraldehyde 3-phosphate. This Streptococcus mutans serotype c (strain ATCC 700610 / UA159) protein is Tryptophan synthase alpha chain.